We begin with the raw amino-acid sequence, 257 residues long: UPF0246 protein CPS_4102 (257 aa).

This sequence belongs to the UPF0246 family.

This is UPF0246 protein CPS_4102 from Colwellia psychrerythraea (strain 34H / ATCC BAA-681) (Vibrio psychroerythus).